The primary structure comprises 130 residues: MAENQNYGTGRRKSSSARVFIKPGSGKIVINQRELDVYFGRETSRMIVRQPLELVELTDKLDLYVTVKGGGISGQAGAIRHGITRALIEYDETLRPALRAAGFVTRDARRVERKKIGLHKARRRPQYSKR.

The protein belongs to the universal ribosomal protein uS9 family.

The chain is Small ribosomal subunit protein uS9 from Histophilus somni (strain 129Pt) (Haemophilus somnus).